The primary structure comprises 221 residues: MNLAGMIDHTALKAETSRAQIETLCKEALEYKFASVCVNPTNVALAAELLKSDDAVKVCTVIGFPLGANTPEVKAFETQDAIKNGATEIDMVLNIGALKDGDLSLVERDIRAVVEAANGTLVKVIFENCLLTKEEIKTAAELSVKAGADFVKTSTGFSTGGATVEDIRLMRETVGPDIGVKASGGVRDFEGAKAMIDAGATRIGASAGIAIVTGGTSDSDY.

Asp-90 serves as the catalytic Proton donor/acceptor. Residue Lys-152 is the Schiff-base intermediate with acetaldehyde of the active site. The active-site Proton donor/acceptor is Lys-181.

This sequence belongs to the DeoC/FbaB aldolase family. DeoC type 1 subfamily.

It is found in the cytoplasm. It carries out the reaction 2-deoxy-D-ribose 5-phosphate = D-glyceraldehyde 3-phosphate + acetaldehyde. Its pathway is carbohydrate degradation; 2-deoxy-D-ribose 1-phosphate degradation; D-glyceraldehyde 3-phosphate and acetaldehyde from 2-deoxy-alpha-D-ribose 1-phosphate: step 2/2. Its function is as follows. Catalyzes a reversible aldol reaction between acetaldehyde and D-glyceraldehyde 3-phosphate to generate 2-deoxy-D-ribose 5-phosphate. The sequence is that of Deoxyribose-phosphate aldolase from Exiguobacterium sibiricum (strain DSM 17290 / CCUG 55495 / CIP 109462 / JCM 13490 / 255-15).